Here is a 72-residue protein sequence, read N- to C-terminus: Translation initiation factor IF-1 (72 aa).

In terms of domain architecture, S1-like spans 1–72; the sequence is MAKEELLEMR…TKGRITYRFK (72 aa).

It belongs to the IF-1 family. Component of the 30S ribosomal translation pre-initiation complex which assembles on the 30S ribosome in the order IF-2 and IF-3, IF-1 and N-formylmethionyl-tRNA(fMet); mRNA recruitment can occur at any time during PIC assembly.

It is found in the cytoplasm. In terms of biological role, one of the essential components for the initiation of protein synthesis. Stabilizes the binding of IF-2 and IF-3 on the 30S subunit to which N-formylmethionyl-tRNA(fMet) subsequently binds. Helps modulate mRNA selection, yielding the 30S pre-initiation complex (PIC). Upon addition of the 50S ribosomal subunit IF-1, IF-2 and IF-3 are released leaving the mature 70S translation initiation complex. In Sphingopyxis alaskensis (strain DSM 13593 / LMG 18877 / RB2256) (Sphingomonas alaskensis), this protein is Translation initiation factor IF-1.